Consider the following 162-residue polypeptide: MGLETEKADVQLFMADDAYSHHSVVDYTDPEKYVDSSQDRDPHQLNSHLKLGFEDLIAEPPTTHSFDKVWICSHALFEISKYVIYKFLTVFLAIPLAFIAGILFATLSCLHIWILMPFVKTCLMVLPSVQTIWKSVTDVVIGPLCTSVGRIFSSVSMQLSHD.

Residues 1-86 (MGLETEKADV…FEISKYVIYK (86 aa)) lie on the Cytoplasmic side of the membrane. The residue at position 19 (Y19) is a Phosphotyrosine; by SRC. 2 positions are modified to phosphoserine: S20 and S23. Phosphotyrosine; by SRC is present on Y27. S36 carries the phosphoserine modification. The segment at residues 87–107 (FLTVFLAIPLAFIAGILFATL) is an intramembrane region (helical). Residues 108 to 162 (SCLHIWILMPFVKTCLMVLPSVQTIWKSVTDVVIGPLCTSVGRIFSSVSMQLSHD) lie on the Cytoplasmic side of the membrane.

Belongs to the caveolin family. As to quaternary structure, monomer or homodimer. Interacts with CAV1; the interaction forms a stable heterooligomeric complex that is required for targeting to lipid rafts and for caveolae formation. Tyrosine phosphorylated forms do not form heterooligomers with the Tyr-19-phosphorylated form existing as a monomer or dimer and the Tyr-27-form as a monomer only. Interacts (tyrosine phosphorylated form) with the SH2 domain-containing proteins, RASA1, NCK1 and SRC. Interacts (tyrosine phosphorylated form) with INSR; the interaction (Tyr-27-phosphorylated form) is increased on insulin stimulation. Interacts (Tyr-19-phosphorylated form) with MAPK1 (phosphorylated form); the interaction, promoted by insulin, leads to nuclear location and MAPK1 activation. Interacts with STAT3; the interaction is increased on insulin-induced tyrosine phosphorylation leading to STAT activation. Phosphorylated on serine and tyrosine residues. CAV1 promotes phosphorylation on Ser-23 which targets the complex to the plasma membrane, lipid rafts and caveolae. Phosphorylation on Ser-36 appears to modulate mitosis in endothelial cells. Phosphorylation on both Tyr-19 and Tyr-27 is required for insulin-induced 'Ser-727' phosphorylation of STAT3 and its activation. Phosphorylation on Tyr-19 is required for insulin-induced phosphorylation of MAPK1 and DNA binding of STAT3. Tyrosine phosphorylation is induced by both EGF and insulin. As to expression, in the retina, mainly expressed in vessels, but also diffuse expression in the inner and outer plexiform layers and in the inner nuclear layer.

It localises to the nucleus. The protein resides in the cytoplasm. Its subcellular location is the golgi apparatus membrane. The protein localises to the cell membrane. It is found in the membrane. It localises to the caveola. In terms of biological role, may act as a scaffolding protein within caveolar membranes. Interacts directly with G-protein alpha subunits and can functionally regulate their activity. Acts as an accessory protein in conjunction with CAV1 in targeting to lipid rafts and driving caveolae formation. The Ser-36 phosphorylated form has a role in modulating mitosis in endothelial cells. Positive regulator of cellular mitogenesis of the MAPK signaling pathway. Required for the insulin-stimulated nuclear translocation and activation of MAPK1 and STAT3, and the subsequent regulation of cell cycle progression. The sequence is that of Caveolin-2 (Cav2) from Rattus norvegicus (Rat).